A 427-amino-acid polypeptide reads, in one-letter code: Amino acid transporter AVT3A (427 aa).

Residues 1–35 (MRYDQEAGSSSHSLPSGSSSHSLPPTEDTPLLGPR) are disordered. Residues 1-42 (MRYDQEAGSSSHSLPSGSSSHSLPPTEDTPLLGPRTLSSQPK) are Cytoplasmic-facing. Positions 8-24 (GSSSHSLPSGSSSHSLP) are enriched in low complexity. A helical membrane pass occupies residues 43-63 (TFANVFIAIVGAGVLGLPYTF). The Vacuolar segment spans residues 64–69 (KKTGWL). A helical membrane pass occupies residues 70 to 90 (LGLLTLLFVSSLTFFCMMLLV). The Cytoplasmic segment spans residues 91 to 122 (HTRRKLESLSGFNSITSFGDLGESVCGPAGRL). A helical transmembrane segment spans residues 123–143 (VVDVMLVLSQSGFCVSYLIFV). The Vacuolar portion of the chain corresponds to 144–157 (ATTMANLLSRGTEH). Residues 158–178 (ILGLDAASIYLWGCFPFQLGL) traverse the membrane as a helical segment. Topologically, residues 179 to 186 (NSIPSLTH) are cytoplasmic. The chain crosses the membrane as a helical span at residues 187–207 (LAPLSIFADIVDVAATLVVMV). The Vacuolar segment spans residues 208–227 (QDVFIFLKRRPPLRVFGGVS). The helical transmembrane segment at 228–248 (VFFYGLGVAVYAFEGIGMVLP) threads the bilayer. At 249-262 (LELEAKYKDKFGRA) the chain is on the cytoplasmic side. A helical membrane pass occupies residues 263–283 (LGLAMGLISIMYGAFGLLGYM). The Vacuolar segment spans residues 284–300 (AYGEETKDIITTNLGTG). The chain crosses the membrane as a helical span at residues 301–321 (VVSTLVQLGLAINLFFTFPLM). The Cytoplasmic portion of the chain corresponds to 322-339 (MQPVYEVVERRLCSSRYS). A helical membrane pass occupies residues 340–360 (VWVRWATVLVVTLVALLVPNF). Over 361–362 (AD) the chain is Vacuolar. A helical transmembrane segment spans residues 363-383 (FLSLVGSSVCVVLGFVLPSLF). Residues 384-396 (HLQAFKNELSITR) are Cytoplasmic-facing. A helical transmembrane segment spans residues 397–417 (IVVDVLVFLIGVMIAITGTWT). Over 418–427 (AVHEILTSKA) the chain is Vacuolar.

This sequence belongs to the amino acid/polyamine transporter 2 family. Amino acid/auxin permease (AAAP) (TC 2.A.18.8) subfamily. As to expression, ubiquitous.

The protein resides in the vacuole membrane. Its function is as follows. Translocates preferentially neutral amino acids and to a lesser extent aromatic amino acids from the vacuole to the cytoplasm. Requires ATP for function. In Arabidopsis thaliana (Mouse-ear cress), this protein is Amino acid transporter AVT3A.